The following is a 282-amino-acid chain: Phosphatidylserine decarboxylase proenzyme (282 aa).

Active-site charge relay system; for autoendoproteolytic cleavage activity residues include D85, H142, and S244. S244 functions as the Schiff-base intermediate with substrate; via pyruvic acid; for decarboxylase activity in the catalytic mechanism. S244 bears the Pyruvic acid (Ser); by autocatalysis mark.

It belongs to the phosphatidylserine decarboxylase family. PSD-B subfamily. Prokaryotic type I sub-subfamily. As to quaternary structure, heterodimer of a large membrane-associated beta subunit and a small pyruvoyl-containing alpha subunit. The cofactor is pyruvate. Is synthesized initially as an inactive proenzyme. Formation of the active enzyme involves a self-maturation process in which the active site pyruvoyl group is generated from an internal serine residue via an autocatalytic post-translational modification. Two non-identical subunits are generated from the proenzyme in this reaction, and the pyruvate is formed at the N-terminus of the alpha chain, which is derived from the carboxyl end of the proenzyme. The autoendoproteolytic cleavage occurs by a canonical serine protease mechanism, in which the side chain hydroxyl group of the serine supplies its oxygen atom to form the C-terminus of the beta chain, while the remainder of the serine residue undergoes an oxidative deamination to produce ammonia and the pyruvoyl prosthetic group on the alpha chain. During this reaction, the Ser that is part of the protease active site of the proenzyme becomes the pyruvoyl prosthetic group, which constitutes an essential element of the active site of the mature decarboxylase.

Its subcellular location is the cell membrane. It catalyses the reaction a 1,2-diacyl-sn-glycero-3-phospho-L-serine + H(+) = a 1,2-diacyl-sn-glycero-3-phosphoethanolamine + CO2. The protein operates within phospholipid metabolism; phosphatidylethanolamine biosynthesis; phosphatidylethanolamine from CDP-diacylglycerol: step 2/2. Catalyzes the formation of phosphatidylethanolamine (PtdEtn) from phosphatidylserine (PtdSer). This chain is Phosphatidylserine decarboxylase proenzyme, found in Coxiella burnetii (strain CbuG_Q212) (Coxiella burnetii (strain Q212)).